We begin with the raw amino-acid sequence, 56 residues long: Photosystem II reaction center X protein (56 aa).

A helical membrane pass occupies residues 27–47; it reads IGSFLAAGALIVAPAAAALIW.

Belongs to the PsbX family. Type 2 subfamily. PSII consists of a core antenna complex that captures photons, and an electron transfer chain that converts photonic excitation into a charge separation. PSII forms dimeric complexes.

The protein localises to the cellular thylakoid membrane. Involved in the binding and/or turnover of quinones at the Q(B) site of Photosystem II. This Prochlorococcus marinus (strain NATL2A) protein is Photosystem II reaction center X protein.